Here is a 513-residue protein sequence, read N- to C-terminus: ATP synthase subunit alpha (513 aa).

169 to 176 (GDRQTGKT) contacts ATP.

Belongs to the ATPase alpha/beta chains family. As to quaternary structure, F-type ATPases have 2 components, CF(1) - the catalytic core - and CF(0) - the membrane proton channel. CF(1) has five subunits: alpha(3), beta(3), gamma(1), delta(1), epsilon(1). CF(0) has three main subunits: a(1), b(2) and c(9-12). The alpha and beta chains form an alternating ring which encloses part of the gamma chain. CF(1) is attached to CF(0) by a central stalk formed by the gamma and epsilon chains, while a peripheral stalk is formed by the delta and b chains.

The protein localises to the cell inner membrane. It catalyses the reaction ATP + H2O + 4 H(+)(in) = ADP + phosphate + 5 H(+)(out). Its function is as follows. Produces ATP from ADP in the presence of a proton gradient across the membrane. The alpha chain is a regulatory subunit. The polypeptide is ATP synthase subunit alpha (Thiobacillus denitrificans (strain ATCC 25259 / T1)).